The following is a 219-amino-acid chain: Thiamine-phosphate synthase (219 aa).

Residues 44–48 and Asn79 contribute to the 4-amino-2-methyl-5-(diphosphooxymethyl)pyrimidine site; that span reads QFREK. Mg(2+)-binding residues include Asp80 and Asp99. 4-amino-2-methyl-5-(diphosphooxymethyl)pyrimidine is bound at residue Ser117. 143 to 145 serves as a coordination point for 2-[(2R,5Z)-2-carboxy-4-methylthiazol-5(2H)-ylidene]ethyl phosphate; sequence TST. Position 146 (Lys146) interacts with 4-amino-2-methyl-5-(diphosphooxymethyl)pyrimidine. Residues Gly175 and 195-196 contribute to the 2-[(2R,5Z)-2-carboxy-4-methylthiazol-5(2H)-ylidene]ethyl phosphate site; that span reads IS.

It belongs to the thiamine-phosphate synthase family. Mg(2+) serves as cofactor.

It catalyses the reaction 2-[(2R,5Z)-2-carboxy-4-methylthiazol-5(2H)-ylidene]ethyl phosphate + 4-amino-2-methyl-5-(diphosphooxymethyl)pyrimidine + 2 H(+) = thiamine phosphate + CO2 + diphosphate. The catalysed reaction is 2-(2-carboxy-4-methylthiazol-5-yl)ethyl phosphate + 4-amino-2-methyl-5-(diphosphooxymethyl)pyrimidine + 2 H(+) = thiamine phosphate + CO2 + diphosphate. The enzyme catalyses 4-methyl-5-(2-phosphooxyethyl)-thiazole + 4-amino-2-methyl-5-(diphosphooxymethyl)pyrimidine + H(+) = thiamine phosphate + diphosphate. It functions in the pathway cofactor biosynthesis; thiamine diphosphate biosynthesis; thiamine phosphate from 4-amino-2-methyl-5-diphosphomethylpyrimidine and 4-methyl-5-(2-phosphoethyl)-thiazole: step 1/1. Condenses 4-methyl-5-(beta-hydroxyethyl)thiazole monophosphate (THZ-P) and 2-methyl-4-amino-5-hydroxymethyl pyrimidine pyrophosphate (HMP-PP) to form thiamine monophosphate (TMP). The chain is Thiamine-phosphate synthase from Bacillus cereus (strain 03BB102).